A 100-amino-acid chain; its full sequence is Small ribosomal subunit protein uS14c (100 aa).

This sequence belongs to the universal ribosomal protein uS14 family. As to quaternary structure, part of the 30S ribosomal subunit.

It localises to the plastid. Its subcellular location is the chloroplast. Binds 16S rRNA, required for the assembly of 30S particles. In Eucalyptus globulus subsp. globulus (Tasmanian blue gum), this protein is Small ribosomal subunit protein uS14c.